Here is a 96-residue protein sequence, read N- to C-terminus: MEQAPEDQGPQREPYNEWTLELLEELKSEAVRHFPRIWLHSLGQYIYETYGDTWAGVEALIRILQQLLFIHFRIGCQHSRIGITRQRRARNGSSRS.

The tract at residues 1 to 42 (MEQAPEDQGPQREPYNEWTLELLEELKSEAVRHFPRIWLHSL) is homooligomerization. Residues Ser79, Ser94, and Ser96 each carry the phosphoserine; by host modification.

This sequence belongs to the HIV-1 VPR protein family. In terms of assembly, homooligomer, may form homodimer. Interacts with p6-gag region of the Pr55 Gag precursor protein through a (Leu-X-X)4 motif near the C-terminus of the P6gag protein. Interacts with host UNG. May interact with host RAD23A/HHR23A. Interacts with host VPRBP/DCAF1, leading to hijack the CUL4A-RBX1-DDB1-DCAF1/VPRBP complex, mediating ubiquitination of host proteins such as TERT and ZGPAT and arrest of the cell cycle in G2 phase. Phosphorylated on several residues by host. These phosphorylations regulate VPR activity for the nuclear import of the HIV-1 pre-integration complex.

The protein resides in the virion. Its subcellular location is the host nucleus. The protein localises to the host extracellular space. Functionally, during virus replication, may deplete host UNG protein, and incude G2-M cell cycle arrest. Acts by targeting specific host proteins for degradation by the 26S proteasome, through association with the cellular CUL4A-DDB1 E3 ligase complex by direct interaction with host VPRPB/DCAF-1. Cell cycle arrest reportedly occurs within hours of infection and is not blocked by antiviral agents, suggesting that it is initiated by the VPR carried into the virion. Additionally, VPR induces apoptosis in a cell cycle dependent manner suggesting that these two effects are mechanistically linked. Detected in the serum and cerebrospinal fluid of AIDS patient, VPR may also induce cell death to bystander cells. During virus entry, plays a role in the transport of the viral pre-integration (PIC) complex to the host nucleus. This function is crucial for viral infection of non-dividing macrophages. May act directly at the nuclear pore complex, by binding nucleoporins phenylalanine-glycine (FG)-repeat regions. This chain is Protein Vpr, found in Human immunodeficiency virus type 1 group M subtype D (isolate Z2/CDC-Z34) (HIV-1).